The sequence spans 169 residues: Thiol peroxidase (169 aa).

In terms of domain architecture, Thioredoxin spans 19–167 (LKVGDRAPEA…YDEVVNKVKE (149 aa)). Residue Cys61 is the Cysteine sulfenic acid (-SOH) intermediate of the active site. The cysteines at positions 61 and 95 are disulfide-linked.

It belongs to the peroxiredoxin family. Tpx subfamily. In terms of assembly, homodimer.

The enzyme catalyses a hydroperoxide + [thioredoxin]-dithiol = an alcohol + [thioredoxin]-disulfide + H2O. Functionally, thiol-specific peroxidase that catalyzes the reduction of hydrogen peroxide and organic hydroperoxides to water and alcohols, respectively. Plays a role in cell protection against oxidative stress by detoxifying peroxides. This Aquifex aeolicus (strain VF5) protein is Thiol peroxidase.